We begin with the raw amino-acid sequence, 501 residues long: ATP synthase subunit alpha (501 aa).

169–176 serves as a coordination point for ATP; it reads GDRQTGKT.

Belongs to the ATPase alpha/beta chains family. F-type ATPases have 2 components, CF(1) - the catalytic core - and CF(0) - the membrane proton channel. CF(1) has five subunits: alpha(3), beta(3), gamma(1), delta(1), epsilon(1). CF(0) has three main subunits: a(1), b(2) and c(9-12). The alpha and beta chains form an alternating ring which encloses part of the gamma chain. CF(1) is attached to CF(0) by a central stalk formed by the gamma and epsilon chains, while a peripheral stalk is formed by the delta and b chains.

The protein resides in the cell inner membrane. It carries out the reaction ATP + H2O + 4 H(+)(in) = ADP + phosphate + 5 H(+)(out). In terms of biological role, produces ATP from ADP in the presence of a proton gradient across the membrane. The alpha chain is a regulatory subunit. In Campylobacter lari (strain RM2100 / D67 / ATCC BAA-1060), this protein is ATP synthase subunit alpha.